Reading from the N-terminus, the 618-residue chain is uncharacterized protein (618 aa).

The N-terminal stretch at 1 to 29 is a signal peptide; sequence MSFLVLPPEVNSALMFAGAGSGPTLAAAA. The disordered stretch occupies residues 598-618; it reads SGDNSSGGFNAGNDQSGFFDG.

Belongs to the mycobacterial PPE family.

This is an uncharacterized protein from Mycobacterium tuberculosis (strain ATCC 25618 / H37Rv).